A 944-amino-acid polypeptide reads, in one-letter code: Serine/threonine-protein kinase PLK4 (944 aa).

In terms of domain architecture, Protein kinase spans 12–265 (FKVLNLLGKG…LSSVLDHAFM (254 aa)). ATP is bound by residues 18-26 (LGKGSFACV) and K41. The active-site Proton acceptor is the D136. Disordered stretches follow at residues 327-396 (KDKH…YSER), 432-463 (RSLE…RSND), and 530-561 (LGIK…QQAF). A compositionally biased stretch (polar residues) spans 378 to 394 (RSGTSQSQTYAKPSSYS). Basic and acidic residues predominate over residues 432–447 (RSLERHTSPPVKEKTP). Over residues 548–561 (FGEQSKSRVPQQAF) the composition is skewed to polar residues. The region spanning 565–678 (TLRSIISPLN…AKFIKLVRSK (114 aa)) is the Cryptic POLO box 1 (CPB1) domain. A Cryptic POLO box 2 (CPB2) domain is found at 679 to 791 (TPKVTYYTRY…GRRPALAESP (113 aa)). The segment at 786–809 (ALAESPKTQPTPSVDSARERKEEQ) is disordered. Residues 862 to 940 (QVLKSVFVEN…LSSILMLFAS (79 aa)) form the POLO box domain.

The protein belongs to the protein kinase superfamily. Ser/Thr protein kinase family. CDC5/Polo subfamily. In terms of assembly, homodimer. Ubiquitinated; leading to its degradation by the proteasome.

It localises to the cytoplasm. The protein localises to the cytoskeleton. Its subcellular location is the microtubule organizing center. It is found in the centrosome. The protein resides in the centriole. It catalyses the reaction L-seryl-[protein] + ATP = O-phospho-L-seryl-[protein] + ADP + H(+). The catalysed reaction is L-threonyl-[protein] + ATP = O-phospho-L-threonyl-[protein] + ADP + H(+). Its function is as follows. Serine/threonine-protein kinase that plays a central role in centriole duplication. Able to trigger procentriole formation on the surface of the parental centriole cylinder, leading to the recruitment of centriole biogenesis proteins such as sass6, cpap, ccp110, cep135 and gamma-tubulin. When overexpressed, it is able to induce centrosome amplification through the simultaneous generation of multiple procentrioles adjoining each parental centriole during S phase. Its central role in centriole replication suggests a possible role in tumorigenesis, centrosome aberrations being frequently observed in tumors. Also involved in deuterosome-mediated centriole amplification in multiciliated that can generate more than 100 centrioles. This is Serine/threonine-protein kinase PLK4 from Xenopus laevis (African clawed frog).